The sequence spans 96 residues: Pyrimidine/purine nucleoside phosphorylase (96 aa).

This sequence belongs to the nucleoside phosphorylase PpnP family.

It carries out the reaction a purine D-ribonucleoside + phosphate = a purine nucleobase + alpha-D-ribose 1-phosphate. The catalysed reaction is adenosine + phosphate = alpha-D-ribose 1-phosphate + adenine. The enzyme catalyses cytidine + phosphate = cytosine + alpha-D-ribose 1-phosphate. It catalyses the reaction guanosine + phosphate = alpha-D-ribose 1-phosphate + guanine. It carries out the reaction inosine + phosphate = alpha-D-ribose 1-phosphate + hypoxanthine. The catalysed reaction is thymidine + phosphate = 2-deoxy-alpha-D-ribose 1-phosphate + thymine. The enzyme catalyses uridine + phosphate = alpha-D-ribose 1-phosphate + uracil. It catalyses the reaction xanthosine + phosphate = alpha-D-ribose 1-phosphate + xanthine. Its function is as follows. Catalyzes the phosphorolysis of diverse nucleosides, yielding D-ribose 1-phosphate and the respective free bases. Can use uridine, adenosine, guanosine, cytidine, thymidine, inosine and xanthosine as substrates. Also catalyzes the reverse reactions. This is Pyrimidine/purine nucleoside phosphorylase from Erwinia tasmaniensis (strain DSM 17950 / CFBP 7177 / CIP 109463 / NCPPB 4357 / Et1/99).